A 435-amino-acid chain; its full sequence is Adenylosuccinate synthetase (435 aa).

GTP-binding positions include 17–23 (GDEGKGK) and 45–47 (GHT). The active-site Proton acceptor is Asp18. Mg(2+)-binding residues include Asp18 and Gly45. IMP is bound by residues 18–21 (DEGK), 43–46 (NAGH), Thr135, Arg149, Gln230, Thr245, and Arg309. His46 (proton donor) is an active-site residue. 305-311 (TVSGRAR) provides a ligand contact to substrate. GTP-binding positions include Arg311, 337–339 (LLD), and 419–421 (SVG).

Belongs to the adenylosuccinate synthetase family. In terms of assembly, homodimer. It depends on Mg(2+) as a cofactor.

The protein resides in the cytoplasm. It carries out the reaction IMP + L-aspartate + GTP = N(6)-(1,2-dicarboxyethyl)-AMP + GDP + phosphate + 2 H(+). The protein operates within purine metabolism; AMP biosynthesis via de novo pathway; AMP from IMP: step 1/2. Plays an important role in the de novo pathway of purine nucleotide biosynthesis. Catalyzes the first committed step in the biosynthesis of AMP from IMP. This is Adenylosuccinate synthetase from Spiroplasma citri.